We begin with the raw amino-acid sequence, 191 residues long: Rho-related GTP-binding protein RhoH (191 aa).

Glycine 11–threonine 18 serves as a coordination point for GTP. An Effector region motif is present at residues tyrosine 33–threonine 41. A GTP-binding site is contributed by aspartate 58–asparagine 62. Positions tyrosine 73–alanine 86 are interaction with ZAP70. Residue threonine 116–aspartate 119 participates in GTP binding. Cysteine 188 is modified (cysteine methyl ester). Cysteine 188 is lipidated: S-geranylgeranyl cysteine. The propeptide at lysine 189–phenylalanine 191 is removed in mature form.

Belongs to the small GTPase superfamily. Rho family. As to quaternary structure, interacts with GDI1 and GDI2. Interacts with ZAP70 (via SH2 domains) and the interaction is enhanced by its phosphorylation by LCK. Interacts with SYK and the interaction is enhanced by its phosphorylation by FYN. Post-translationally, phosphorylated on tyrosine by LCK. Phosphorylated by FYN. Phosphorylation enhances the interactions with ZAP70 and SYK and is critical for its function in thymocyte development. Expression is widespread in hematopoietic cells, including in bone marrow progenitor cells and in differentiated myeloid as well as lymphoid cells. Expressed at high levels in the thymus and mast cells, found in spleen and low-density bone marrow (LDBM) cells and is detected at a low level in neutrophils. In the thymus it is detected in thymocytes of the thymic cortex but not in non-lymphoid cells of fibrovascular and fibroadipose tissues. Expressed in T-cells, B-cells and mast cells.

It localises to the cytoplasm. The protein localises to the cell membrane. In terms of biological role, binds GTP but lacks intrinsic GTPase activity and is resistant to Rho-specific GTPase-activating proteins. Inhibits the activation of NF-kappa-B by TNF and IKKB and the activation of CRK/p38 by TNF. Inhibits activities of RAC1, RHOA and CDC42. Negatively regulates leukotriene production in neutrophils. Negative regulator of hematopoietic progenitor cell proliferation, survival and migration. Critical regulator of thymocyte development and T-cell antigen receptor (TCR) signaling by mediating recruitment and activation of ZAP70. Required for phosphorylation of CD3Z, membrane translocation of ZAP70 and subsequent activation of the ZAP70-mediated pathways. Essential for efficient beta-selection and positive selection by promoting the ZAP70-dependent phosphorylation of the LAT signalosome during pre-TCR and TCR signaling. Crucial for thymocyte maturation during DN3 to DN4 transition and during positive selection. Plays critical roles in mast cell function by facilitating phosphorylation of SYK in Fc epsilon RI-mediated signal transduction. Essential for the phosphorylation of LAT, LCP2, PLCG1 and PLCG2 and for Ca(2+) mobilization in mast cells. In Mus musculus (Mouse), this protein is Rho-related GTP-binding protein RhoH (Rhoh).